A 164-amino-acid polypeptide reads, in one-letter code: Arginine repressor (164 aa).

This sequence belongs to the ArgR family.

It is found in the cytoplasm. Its pathway is amino-acid biosynthesis; L-arginine biosynthesis [regulation]. Functionally, regulates arginine biosynthesis genes. This chain is Arginine repressor, found in Mycolicibacterium paratuberculosis (strain ATCC BAA-968 / K-10) (Mycobacterium paratuberculosis).